The following is a 99-amino-acid chain: Large ribosomal subunit protein uL23 (99 aa).

Belongs to the universal ribosomal protein uL23 family. In terms of assembly, part of the 50S ribosomal subunit. Contacts protein L29, and trigger factor when it is bound to the ribosome.

One of the early assembly proteins it binds 23S rRNA. One of the proteins that surrounds the polypeptide exit tunnel on the outside of the ribosome. Forms the main docking site for trigger factor binding to the ribosome. This is Large ribosomal subunit protein uL23 from Ectopseudomonas mendocina (strain ymp) (Pseudomonas mendocina).